Reading from the N-terminus, the 313-residue chain is GTP cyclohydrolase MptA (313 aa).

It belongs to the GTP cyclohydrolase IV family. As to quaternary structure, homodimer. Fe(2+) is required as a cofactor.

It carries out the reaction GTP + H2O = 7,8-dihydroneopterin 2',3'-cyclic phosphate + formate + diphosphate + H(+). It participates in cofactor biosynthesis; 5,6,7,8-tetrahydromethanopterin biosynthesis. In terms of biological role, converts GTP to 7,8-dihydro-D-neopterin 2',3'-cyclic phosphate, the first intermediate in the biosynthesis of coenzyme methanopterin. This chain is GTP cyclohydrolase MptA, found in Methanosphaera stadtmanae (strain ATCC 43021 / DSM 3091 / JCM 11832 / MCB-3).